The primary structure comprises 201 residues: FMN-dependent NADH:quinone oxidoreductase (201 aa).

FMN is bound by residues serine 9 and serine 16–serine 18.

It belongs to the azoreductase type 1 family. Homodimer. It depends on FMN as a cofactor.

It catalyses the reaction 2 a quinone + NADH + H(+) = 2 a 1,4-benzosemiquinone + NAD(+). The catalysed reaction is N,N-dimethyl-1,4-phenylenediamine + anthranilate + 2 NAD(+) = 2-(4-dimethylaminophenyl)diazenylbenzoate + 2 NADH + 2 H(+). Quinone reductase that provides resistance to thiol-specific stress caused by electrophilic quinones. In terms of biological role, also exhibits azoreductase activity. Catalyzes the reductive cleavage of the azo bond in aromatic azo compounds to the corresponding amines. The chain is FMN-dependent NADH:quinone oxidoreductase from Mesomycoplasma hyopneumoniae (strain 232) (Mycoplasma hyopneumoniae).